A 562-amino-acid chain; its full sequence is Urocanate hydratase (562 aa).

Residues 52 to 53 (GG), Gln-130, 176 to 178 (GMG), Glu-196, Arg-201, 242 to 243 (NA), 263 to 267 (QTSAH), 273 to 274 (YL), and Tyr-322 contribute to the NAD(+) site. Cys-410 is a catalytic residue. Gly-492 is an NAD(+) binding site.

It belongs to the urocanase family. NAD(+) is required as a cofactor.

It localises to the cytoplasm. It catalyses the reaction 4-imidazolone-5-propanoate = trans-urocanate + H2O. It participates in amino-acid degradation; L-histidine degradation into L-glutamate; N-formimidoyl-L-glutamate from L-histidine: step 2/3. In terms of biological role, catalyzes the conversion of urocanate to 4-imidazolone-5-propionate. This is Urocanate hydratase from Klebsiella pneumoniae subsp. pneumoniae (strain ATCC 700721 / MGH 78578).